A 334-amino-acid chain; its full sequence is uncharacterized protein (334 aa).

The protein belongs to the MG414/MG415 family.

This is an uncharacterized protein from Mycoplasma pneumoniae (strain ATCC 29342 / M129 / Subtype 1) (Mycoplasmoides pneumoniae).